Reading from the N-terminus, the 109-residue chain is UPF0122 protein CLH_1195 (109 aa).

The protein belongs to the UPF0122 family.

Its function is as follows. Might take part in the signal recognition particle (SRP) pathway. This is inferred from the conservation of its genetic proximity to ftsY/ffh. May be a regulatory protein. The polypeptide is UPF0122 protein CLH_1195 (Clostridium botulinum (strain Alaska E43 / Type E3)).